Reading from the N-terminus, the 600-residue chain is ATP-dependent lipid A-core flippase (600 aa).

The next 6 membrane-spanning stretches (helical) occupy residues 28–48 (TLSILGLIVYGLVDAAFIAFI), 80–100 (VMLMAPLVVIGMFTLRGVANF), 159–179 (ALISIVRDSITVIGMLALMFF), 182–202 (WKLSLCILVIGPLMGVVISIV), 267–287 (VSQPVIMIIGSFALAFVLYAA), and 295–315 (ELTAGTFAAILGAMLAMLQPI). Residues 29–327 (LSILGLIVYG…LTRVNAEFQR (299 aa)) form the ABC transmembrane type-1 domain. Residues 359–596 (LRFDNVSFSY…KGAYAGLYQM (238 aa)) enclose the ABC transporter domain. An ATP-binding site is contributed by 393–400 (GRSGSGKS).

The protein belongs to the ABC transporter superfamily. Lipid exporter (TC 3.A.1.106) family. Homodimer.

Its subcellular location is the cell inner membrane. The catalysed reaction is ATP + H2O + lipid A-core oligosaccharideSide 1 = ADP + phosphate + lipid A-core oligosaccharideSide 2.. Involved in lipopolysaccharide (LPS) biosynthesis. Translocates lipid A-core from the inner to the outer leaflet of the inner membrane. Transmembrane domains (TMD) form a pore in the inner membrane and the ATP-binding domain (NBD) is responsible for energy generation. The protein is ATP-dependent lipid A-core flippase of Shewanella denitrificans (strain OS217 / ATCC BAA-1090 / DSM 15013).